The chain runs to 301 residues: Troponin T, cardiac muscle (301 aa).

A compositionally biased stretch (acidic residues) spans 1 to 72 (MSDAEEVVEE…EAKDAEEGPV (72 aa)). Disordered regions lie at residues 1–97 (MSDA…DGER) and 125–224 (NRKK…KKKI). Residue serine 2 is modified to N-acetylserine. Serine 2 is modified (phosphoserine; by CK2). 2 stretches are compositionally biased toward basic and acidic residues: residues 125-186 (NRKK…DEAR) and 206-224 (QTER…KKKI). Residue threonine 207 is modified to Phosphothreonine; by PKC/PRKCA. The residue at position 211 (serine 211) is a Phosphoserine; by PKC/PRKCA. Threonine 216 carries the post-translational modification Phosphothreonine; by PKC/PRKCA and RAF1. Threonine 297 carries the post-translational modification Phosphothreonine; by PKC/PRKCA.

The protein belongs to the troponin T family. Phosphorylation at Thr-216 by PRKCA induces significant reduction in myofilament calcium sensitivity and actomyosin ATPase activity.

Troponin T is the tropomyosin-binding subunit of troponin, the thin filament regulatory complex which confers calcium-sensitivity to striated muscle actomyosin ATPase activity. The sequence is that of Troponin T, cardiac muscle (Tnnt2) from Mus musculus (Mouse).